The primary structure comprises 93 residues: MKKTLMLLAMVVALVILPFFINHGGEYGGSDGEAESQIQALAPQYKPWFQPLYEPASGEIESLLFTLQGSLGAAVIFYILGYCKGKQRRDDRA.

Transmembrane regions (helical) follow at residues 5-25 (LMLL…NHGG) and 63-83 (LLFT…LGYC).

The protein belongs to the CbiN family. Forms an energy-coupling factor (ECF) transporter complex composed of an ATP-binding protein (A component, CbiO), a transmembrane protein (T component, CbiQ) and 2 possible substrate-capture proteins (S components, CbiM and CbiN) of unknown stoichimetry.

Its subcellular location is the cell inner membrane. It functions in the pathway cofactor biosynthesis; adenosylcobalamin biosynthesis. In terms of biological role, part of the energy-coupling factor (ECF) transporter complex CbiMNOQ involved in cobalt import. The sequence is that of Cobalt transport protein CbiN from Salmonella choleraesuis (strain SC-B67).